A 364-amino-acid polypeptide reads, in one-letter code: MAQQTPLYEQHTLCGARMVDFHGWMMPLHYGSQIDEHHAVRTDAGMFDVSHMTIVDLHGSRTREFLRYLLANDVAKLTKSGKALYSGMLNASGGVIDDLIVYYFTEDFFRLVVNSATREKDLSWITQHAEPFGIEITVRDDLSMIAVQGPNAQAKAATLFNDAQRQAVEGMKPFFGVQAGDLFIATTGYTGEAGYEIALPNEKAADFWRALVEAGVKPCGLGARDTLRLEAGMNLYSQEMDETISPLAANMGWTIAWEPADRDFIGREALEAQREHGTEKLVGLVMTEKGVLRNELPVRFTDAQGNQHEGIITSGTFSPTLGYSIALARVPEGIGETAIVQIRNREMPVKVTKPVFVRNGKAVA.

The protein belongs to the GcvT family. In terms of assembly, the glycine cleavage system is composed of four proteins: P, T, L and H.

The catalysed reaction is N(6)-[(R)-S(8)-aminomethyldihydrolipoyl]-L-lysyl-[protein] + (6S)-5,6,7,8-tetrahydrofolate = N(6)-[(R)-dihydrolipoyl]-L-lysyl-[protein] + (6R)-5,10-methylene-5,6,7,8-tetrahydrofolate + NH4(+). Functionally, the glycine cleavage system catalyzes the degradation of glycine. The chain is Aminomethyltransferase from Escherichia coli O6:H1 (strain CFT073 / ATCC 700928 / UPEC).